We begin with the raw amino-acid sequence, 41 residues long: Histone H3.2 (41 aa).

Residues 1–41 (MARAKQTARKSTGAEAPRKQLASKAARKSAPATGGIKKPHR) form a disordered region.

The protein belongs to the histone H3 family. As to quaternary structure, the nucleosome is a histone octamer containing two molecules each of H2A, H2B, H3 and H4 assembled in one H3-H4 heterotetramer and two H2A-H2B heterodimers. The octamer wraps approximately 147 bp of DNA.

Its subcellular location is the nucleus. It is found in the chromosome. In terms of biological role, core component of nucleosome. Nucleosomes wrap and compact DNA into chromatin, limiting DNA accessibility to the cellular machineries which require DNA as a template. Histones thereby play a central role in transcription regulation, DNA repair, DNA replication and chromosomal stability. DNA accessibility is regulated via a complex set of post-translational modifications of histones, also called histone code, and nucleosome remodeling. This is Histone H3.2 from Tetrahymena borealis.